Here is a 328-residue protein sequence, read N- to C-terminus: MKAPVRVAVTGAAGQIGYALLFRIASGEMLGKDQPVILQLLELPVDKAQAALKGVMMELEDCAFPLLAGMVGTDDAEVAFKDADIALLVGARPRGPGMERKDLLLENAKIFTAQGAALNKVASRDVKVLVVGNPANTNAYIAMKSAPDLKPENFTAMLRLDHNRALSQLSAKLGKPVGGMEKLVVWGNHSPTMYPDYRFATADGASIADAINDQEWNANTFIPTVGKRGAAIIEARGSSSAASAANAAIDHVRDWVLGSNGKWVTMGVPSDGSYGIPEGVIFGFAVTTENGKYTLVKDLPVDDFSQKYIDKTLAELEEERSGVAHLLG.

Residue 11 to 17 coordinates NAD(+); that stretch reads GAAGQIG. 2 residues coordinate substrate: Arg94 and Arg100. NAD(+) contacts are provided by residues Asn107, Gln114, and 131-133; that span reads VGN. Residues Asn133 and Arg164 each contribute to the substrate site. Catalysis depends on His189, which acts as the Proton acceptor.

Belongs to the LDH/MDH superfamily. MDH type 2 family.

It carries out the reaction (S)-malate + NAD(+) = oxaloacetate + NADH + H(+). Functionally, catalyzes the reversible oxidation of malate to oxaloacetate. The polypeptide is Malate dehydrogenase (Stenotrophomonas maltophilia (strain R551-3)).